The chain runs to 414 residues: MPARNHTQWMATPPLQKGEWVDSRVYTDQEIFDEELEKIFKKAWVPFRHESELPKAYDFRTTSIANEPIIVTRGPDNEVRAFLNVCPHRGMLIERRPSGSLYEGQPSGNPKRMTCMFHAWQFDMKGNCVYISREKEGYQDRLPKESVGLRRLRCEVKFGGFVWVNLDDNPISLEDWAGEPFQCLRKTLEAEPMEVFHYHKAIVDTNYKLWHDTNCEFYHDFMHYHNRVTGFNDAYFARKNESFEHGHILVGTFEVNYDQYEGFESRAGLSFPHLPPNQWYMIDLFPGMNFNLRGSALRCDVVTPLGPNKVMIEFRGLGLKSDTPEERQTRINHHNSIWGPFGRNLHEDLIGVQGQGTTMRPGQESRRILHGRQENQTIHDENGMRHYYDKWGKWMNRMPSNPELPYNAPAIAAE.

The Rieske domain occupies 44-163 (WVPFRHESEL…CEVKFGGFVW (120 aa)). Positions 86, 88, 115, and 118 each coordinate [2Fe-2S] cluster. Position 225 (His225) interacts with Fe cation.

This sequence belongs to the bacterial ring-hydroxylating dioxygenase alpha subunit family. As to quaternary structure, the MSA monooxygenase system consists of 4 proteins: the 2 subunits of the hydroxylase component (MsmA and MsmB), a ferredoxin (MsmC) and a ferredoxin reductase (MsmD). The hydroxylase component consists of a 3 alpha (MsmA) and 3 beta (MsmB) subunits. [2Fe-2S] cluster is required as a cofactor. Fe cation serves as cofactor.

It is found in the cytoplasm. The enzyme catalyses methanesulfonate + NADH + O2 = sulfite + formaldehyde + NAD(+) + H2O. With respect to regulation, MSAMO is inhibited by metal chelators (such as bathophenanthroline, bathocuprione, neocuprione, alpha-alpha-dipyridil and sodium EDTA) and by sodium azide, sodium arsenate and potassium cyanide. Functionally, methanesulfonate monooxygenase (MSAMO) mediates the primary degradation of methanesulfonic acid (MSA) to produce formaldehyd and inorganic sulfite by initial hydroxylation of the carbon atom prior to spontaneous cleavage of the unstable hydroxymethanesulfonic acid. MSAMO has a restricted substrate range that includes only the short-chain aliphatic sulfonates (methane- to butanesulfonate) and excludes all larger molecules, such as arylsulfonates and aromatic sulfonates. All MSAMO components are required for enzyme activity. The sequence is that of Methanesulfonate monooxygenase hydroxylase subunit alpha from Methylosulfonomonas methylovora.